Reading from the N-terminus, the 311-residue chain is Delta(1)-pyrroline-2-carboxylate reductase 2 (311 aa).

The protein belongs to the ornithine cyclodeaminase/mu-crystallin family.

It catalyses the reaction L-proline + NAD(+) = 1-pyrroline-2-carboxylate + NADH + H(+). The catalysed reaction is L-proline + NADP(+) = 1-pyrroline-2-carboxylate + NADPH + H(+). Its function is as follows. Catalyzes the reduction of Delta(1)-pyrroline-2-carboxylate (Pyr2C) to L-proline, using preferentially NADPH over NADH as the electron donor. May be involved in a degradation pathway that converts trans-3-hydroxy-L-proline (t3LHyp) to L-proline. The polypeptide is Delta(1)-pyrroline-2-carboxylate reductase 2 (Burkholderia ambifaria (strain ATCC BAA-244 / DSM 16087 / CCUG 44356 / LMG 19182 / AMMD) (Burkholderia cepacia (strain AMMD))).